The following is a 574-amino-acid chain: Sorting nexin-33 (574 aa).

Residues 1-61 (MALKGRALYD…PASYVEIVRP (61 aa)) enclose the SH3 domain. Ser77 is subject to Phosphoserine. The span at 79–90 (GTQGSLYSSPSM) shows a compositional bias: polar residues. The tract at residues 79–116 (GTQGSLYSSPSMASPARSGGGSGFLSNPGSFEDDDDDD) is disordered. Ser92 carries the phosphoserine modification. Residues 230–340 (FACSIEDPTK…HFLSCLDDKQ (111 aa)) enclose the PX domain. Positions 371 to 574 (LQDVEDRVDT…EKTLHMYDHL (204 aa)) constitute a BAR domain.

The protein belongs to the sorting nexin family. Homodimer (via BAR domain). Interacts with ADAM15. Interacts with FASLG. Interacts (via SH3 domain) with DNM1 and DNM2. Interacts with WASL. Interacts with FCHSD1 (via the F-BAR domain). Phosphorylated. As to expression, detected in brain (at protein level).

Its subcellular location is the cytoplasm. It localises to the cytosol. The protein localises to the membrane. It is found in the cytoplasmic vesicle membrane. Functionally, plays a role in the reorganization of the cytoskeleton, endocytosis and cellular vesicle trafficking via its interactions with membranes, WASL, DNM1 and DNM2. Acts both during interphase and at the end of mitotic cell divisions. Required for efficient progress through mitosis and cytokinesis. Required for normal formation of the cleavage furrow at the end of mitosis. Modulates endocytosis of cell-surface proteins, such as APP and PRNP; this then modulates the secretion of APP and PRNP peptides. Promotes membrane tubulation (in vitro). May promote the formation of macropinosomes. The polypeptide is Sorting nexin-33 (Snx33) (Mus musculus (Mouse)).